The primary structure comprises 352 residues: 4-hydroxy-2-oxovalerate aldolase 4 (352 aa).

In terms of domain architecture, Pyruvate carboxyltransferase spans 9-261; the sequence is IRVTDSSLRD…RTGIDTLKII (253 aa). Position 17 to 18 (17 to 18) interacts with substrate; sequence RD. Aspartate 18 serves as a coordination point for Mn(2+). Histidine 21 serves as the catalytic Proton acceptor. Residues serine 171 and histidine 200 each coordinate substrate. Histidine 200 and histidine 202 together coordinate Mn(2+). Substrate is bound at residue tyrosine 291.

It belongs to the 4-hydroxy-2-oxovalerate aldolase family.

The catalysed reaction is (S)-4-hydroxy-2-oxopentanoate = acetaldehyde + pyruvate. In Rhodococcus jostii (strain RHA1), this protein is 4-hydroxy-2-oxovalerate aldolase 4.